Consider the following 1373-residue polypeptide: DNA-directed RNA polymerase subunit beta'' (1373 aa).

Positions 220, 293, 300, and 303 each coordinate Zn(2+).

Belongs to the RNA polymerase beta' chain family. RpoC2 subfamily. In plastids the minimal PEP RNA polymerase catalytic core is composed of four subunits: alpha, beta, beta', and beta''. When a (nuclear-encoded) sigma factor is associated with the core the holoenzyme is formed, which can initiate transcription. Requires Zn(2+) as cofactor.

It is found in the plastid. It localises to the chloroplast. The enzyme catalyses RNA(n) + a ribonucleoside 5'-triphosphate = RNA(n+1) + diphosphate. Functionally, DNA-dependent RNA polymerase catalyzes the transcription of DNA into RNA using the four ribonucleoside triphosphates as substrates. In Lepidium virginicum (Virginia pepperweed), this protein is DNA-directed RNA polymerase subunit beta''.